Here is a 431-residue protein sequence, read N- to C-terminus: Adenylosuccinate lyase (431 aa).

N(6)-(1,2-dicarboxyethyl)-AMP contacts are provided by residues Arg4–Tyr5, Arg67–Asp69, and Thr93–Ser94. The Proton donor/acceptor role is filled by His141. Gln212 is a N(6)-(1,2-dicarboxyethyl)-AMP binding site. Ser262 (proton donor/acceptor) is an active-site residue. Residues Ser263, Lys268–Asn270, Asn276, and Ser307–Ile311 contribute to the N(6)-(1,2-dicarboxyethyl)-AMP site.

This sequence belongs to the lyase 1 family. Adenylosuccinate lyase subfamily. As to quaternary structure, homodimer and homotetramer. Residues from neighboring subunits contribute catalytic and substrate-binding residues to each active site.

The enzyme catalyses N(6)-(1,2-dicarboxyethyl)-AMP = fumarate + AMP. The catalysed reaction is (2S)-2-[5-amino-1-(5-phospho-beta-D-ribosyl)imidazole-4-carboxamido]succinate = 5-amino-1-(5-phospho-beta-D-ribosyl)imidazole-4-carboxamide + fumarate. The protein operates within purine metabolism; AMP biosynthesis via de novo pathway; AMP from IMP: step 2/2. It participates in purine metabolism; IMP biosynthesis via de novo pathway; 5-amino-1-(5-phospho-D-ribosyl)imidazole-4-carboxamide from 5-amino-1-(5-phospho-D-ribosyl)imidazole-4-carboxylate: step 2/2. Functionally, catalyzes two reactions in de novo purine nucleotide biosynthesis. Catalyzes the breakdown of 5-aminoimidazole- (N-succinylocarboxamide) ribotide (SAICAR or 2-[5-amino-1-(5-phospho-beta-D-ribosyl)imidazole-4-carboxamido]succinate) to 5-aminoimidazole-4-carboxamide ribotide (AICAR or 5-amino-1-(5-phospho-beta-D-ribosyl)imidazole-4-carboxamide) and fumarate, and of adenylosuccinate (ADS or N(6)-(1,2-dicarboxyethyl)-AMP) to adenosine monophosphate (AMP) and fumarate. This is Adenylosuccinate lyase (purB) from Staphylococcus epidermidis (strain ATCC 35984 / DSM 28319 / BCRC 17069 / CCUG 31568 / BM 3577 / RP62A).